Here is a 513-residue protein sequence, read N- to C-terminus: Cytochrome P450 monooxygenase eqxH (513 aa).

Residues 13–32 (QYAILCGITVFTLFIVQLSL) traverse the membrane as a helical segment. Residues asparagine 130 and asparagine 295 are each glycosylated (N-linked (GlcNAc...) asparagine). Position 449 (cysteine 449) interacts with heme.

Belongs to the cytochrome P450 family. It depends on heme as a cofactor.

Its subcellular location is the membrane. The protein operates within mycotoxin biosynthesis. Functionally, cytochrome P450 monooxygenase; part of the gene cluster that mediates the biosynthesis of equisetin, a trans-fused decalin-containing tetramic acid with antimicrobial activity. The PKS module of eqxS together with the enoylreductase eqxC catalyze the formation of the polyketide unit which is then conjugated to L-serine by the condensation domain of the eqxS NRPS module. Activity of the Dieckmann cyclase domain (RED) results in release of the Dieckmann product intermediate. Diels-Alderase eqx3 is involved in endo-selective Diels-Alder cycloaddition to form the decalin ring, leading to the production of N-desmethylequisetin also called trichosetin. Subsequent N-methylation is carried out by eqxD to give equisetin. The polypeptide is Cytochrome P450 monooxygenase eqxH (Fusarium heterosporum).